A 576-amino-acid polypeptide reads, in one-letter code: Kinetochore-associated protein DSN1 (576 aa).

Residues 1–11 are compositionally biased toward polar residues; that stretch reads MSLEPTQTVSG. 4 disordered regions span residues 1–22, 35–64, 185–205, and 227–246; these read MSLE…RTHK, LESD…NKQS, YSQP…ISSS, and QPHY…SQRG. The segment covering 235 to 246 has biased composition (basic residues); it reads RERKKSIGSQRG. The residue at position 250 (Ser250) is a Phosphoserine. Positions 412–437 are disordered; sequence RSRRKFSERRKALPKEPKKLLPNSKN. Residues 420–430 are compositionally biased toward basic and acidic residues; that stretch reads RRKALPKEPKK.

Component of the MIND kinetochore complex, which is composed of at least MTW1, NNF1, NSL1 and DSN1. Interacts with NSL1.

The protein localises to the nucleus. The protein resides in the chromosome. Its subcellular location is the centromere. It localises to the kinetochore. Functionally, acts as an essential component of the kinetochore MIND complex, which is required for the spindle checkpoint and kinetochore integrity. MIND plays a role in establishing a bipolar spindle-kinetochore interaction by joining kinetochore subunits contacting DNA to those contacting microtubules. This is Kinetochore-associated protein DSN1 (DSN1) from Saccharomyces cerevisiae (strain ATCC 204508 / S288c) (Baker's yeast).